Reading from the N-terminus, the 294-residue chain is Universal stress protein MSMEG_3950/MSMEI_3859 (294 aa).

G13 provides a ligand contact to ATP. K109 is covalently cross-linked (Isoglutamyl lysine isopeptide (Lys-Gln) (interchain with Q-Cter in protein Pup)). Residues 117–123 (GNRGMGA), 131–132 (ST), G164, D197, 261–267 (GSHGRGG), and 275–277 (SVS) contribute to the ATP site.

This sequence belongs to the universal stress protein A family.

This is Universal stress protein MSMEG_3950/MSMEI_3859 from Mycolicibacterium smegmatis (strain ATCC 700084 / mc(2)155) (Mycobacterium smegmatis).